A 568-amino-acid polypeptide reads, in one-letter code: Periplasmic trehalase (568 aa).

The first 39 residues, 1–39, serve as a signal peptide directing secretion; it reads MPHVVARSGDVMSSAAPPSCTSLLGLSLSMFVAPCTLTA. Substrate is bound by residues Arg-169, 176 to 177, Asn-213, 222 to 224, 294 to 296, and Gly-327; these read WD, RSQ, and RPE. Active-site proton donor/acceptor residues include Asp-329 and Glu-511. Glu-526 lines the substrate pocket.

Belongs to the glycosyl hydrolase 37 family.

The protein resides in the periplasm. It catalyses the reaction alpha,alpha-trehalose + H2O = alpha-D-glucose + beta-D-glucose. Its function is as follows. Provides the cells with the ability to utilize trehalose at high osmolarity by splitting it into glucose molecules that can subsequently be taken up by the phosphotransferase-mediated uptake system. This chain is Periplasmic trehalase, found in Xanthomonas oryzae pv. oryzae (strain MAFF 311018).